A 140-amino-acid chain; its full sequence is Small ribosomal subunit protein uS19 (140 aa).

The interval L55–H74 is disordered.

It belongs to the universal ribosomal protein uS19 family.

Protein S19 forms a complex with S13 that binds strongly to the 16S ribosomal RNA. This is Small ribosomal subunit protein uS19 from Halobacterium salinarum (strain ATCC 29341 / DSM 671 / R1).